The following is a 179-amino-acid chain: Coiled-coil domain-containing protein 32 (179 aa).

Positions 75–98 (EVYLASLEKKLRRIKGLNEEVTSK) form a coiled coil. Residues 157–179 (FLIPPESQAEKPEARDEPAAAEQ) are disordered. A compositionally biased stretch (basic and acidic residues) spans 164-179 (QAEKPEARDEPAAAEQ).

As to quaternary structure, interacts with AP2S1; the interaction is direct and mediates association with adaptor protein complex 2 (AP-2).

The protein resides in the membrane. It localises to the coated pit. Functionally, regulates clathrin-mediated endocytsois of cargos such as transferrin probably through the association and modulation of adaptor protein complex 2 (AP-2). Has a role in ciliogenesis. Required for proper cephalic and left/right axis development. In Rattus norvegicus (Rat), this protein is Coiled-coil domain-containing protein 32 (Ccdc32).